The primary structure comprises 246 residues: tRNA (guanine-N(7)-)-methyltransferase (246 aa).

4 residues coordinate S-adenosyl-L-methionine: E77, E102, D129, and D152. D152 is an active-site residue. Residues K156, D188, and 225-228 (TKFE) contribute to the substrate site.

This sequence belongs to the class I-like SAM-binding methyltransferase superfamily. TrmB family.

The catalysed reaction is guanosine(46) in tRNA + S-adenosyl-L-methionine = N(7)-methylguanosine(46) in tRNA + S-adenosyl-L-homocysteine. It functions in the pathway tRNA modification; N(7)-methylguanine-tRNA biosynthesis. Functionally, catalyzes the formation of N(7)-methylguanine at position 46 (m7G46) in tRNA. The sequence is that of tRNA (guanine-N(7)-)-methyltransferase from Haemophilus influenzae (strain ATCC 51907 / DSM 11121 / KW20 / Rd).